We begin with the raw amino-acid sequence, 1402 residues long: DNA-directed RNA polymerase subunit beta' (1402 aa).

Zn(2+)-binding residues include Cys-71, Cys-73, Cys-86, and Cys-89. Mg(2+) is bound by residues Asp-462, Asp-464, and Asp-466. Positions 811, 885, 892, and 895 each coordinate Zn(2+).

The protein belongs to the RNA polymerase beta' chain family. The RNAP catalytic core consists of 2 alpha, 1 beta, 1 beta' and 1 omega subunit. When a sigma factor is associated with the core the holoenzyme is formed, which can initiate transcription. The cofactor is Mg(2+). Zn(2+) serves as cofactor.

The enzyme catalyses RNA(n) + a ribonucleoside 5'-triphosphate = RNA(n+1) + diphosphate. In terms of biological role, DNA-dependent RNA polymerase catalyzes the transcription of DNA into RNA using the four ribonucleoside triphosphates as substrates. The sequence is that of DNA-directed RNA polymerase subunit beta' from Rhizobium etli (strain ATCC 51251 / DSM 11541 / JCM 21823 / NBRC 15573 / CFN 42).